The following is a 764-amino-acid chain: Irregular chiasm C-roughest protein (764 aa).

The signal sequence occupies residues 1-19 (MLHTMQLLLLATIVGMVRS). The Extracellular portion of the chain corresponds to 20 to 533 (SPYTSYQNQR…QAKKSVSLLM (514 aa)). 5 Ig-like C2-type domains span residues 21–120 (PYTS…PAIR), 132–230 (PEAP…AKIR), 237–343 (PKVK…LDIS), 346–419 (PSFR…AEIS), and 430–530 (PAIG…KSVS). Intrachain disulfides connect cysteine 49–cysteine 107, cysteine 155–cysteine 214, cysteine 281–cysteine 325, cysteine 367–cysteine 408, and cysteine 450–cysteine 508. N-linked (GlcNAc...) asparagine glycans are attached at residues asparagine 211, asparagine 313, asparagine 393, asparagine 400, and asparagine 507. The chain crosses the membrane as a helical span at residues 534–556 (TIVGGISVVAFLLVLTILVVVYI). Over 557–764 (KCKKRTKLPP…SSLLPPPTAV (208 aa)) the chain is Cytoplasmic. 2 disordered regions span residues 640 to 660 (HQNQLQLQQQQQQSHHQHHTQ) and 691 to 719 (NGLPSLQSTTASVVSSSPNGSCSNQSTTA). Positions 692–701 (GLPSLQSTTA) are enriched in polar residues. Over residues 702 to 719 (SVVSSSPNGSCSNQSTTA) the composition is skewed to low complexity.

As to expression, postembryonic expression is strong in the developing optic lobe and in the eye imaginal disk.

It localises to the membrane. Functionally, required for correct axonal pathway formation in the optic lobe and for programmed cell death in the developing retina. The chain is Irregular chiasm C-roughest protein (rst) from Drosophila melanogaster (Fruit fly).